Reading from the N-terminus, the 131-residue chain is C-type natriuretic peptide (131 aa).

An N-terminal signal peptide occupies residues 1-20; that stretch reads MMCKALVFAVLLLAVPLERA. Residues 21-109 constitute a propeptide that is removed on maturation; the sequence is DSRALRTPVD…KRALPDRAKR (89 aa). A disulfide bridge connects residues C115 and C131.

The protein belongs to the natriuretic peptide family. Highly expressed in brain and liver, and moderately in gut, gills and heart. Expressed to a low level in atrium, ventricle and liver of fresh water eels.

It is found in the secreted. Hormone which plays a role in endochondral ossification through regulation of cartilaginous growth plate chondrocytes proliferation and differentiation. May also be vasoactive and natriuretic. May be important for freshwater adaptation. This is C-type natriuretic peptide (cnp) from Anguilla japonica (Japanese eel).